Here is a 457-residue protein sequence, read N- to C-terminus: Tryptophan aminotransferase-related protein 3 (457 aa).

Residues 6–26 (LLIAGSIILNLVFTIHILYNN) traverse the membrane as a helical segment. Pyridoxal 5'-phosphate is bound by residues Tyr-123, 163 to 164 (AT), Asn-237, 257 to 260 (DYAY), 280 to 283 (SLSK), and Arg-291. Lys-283 bears the N6-(pyridoxal phosphate)lysine mark.

It belongs to the alliinase family. Requires pyridoxal 5'-phosphate as cofactor.

The protein resides in the membrane. In terms of biological role, probable aminotransferase. This is Tryptophan aminotransferase-related protein 3 (TAR3) from Arabidopsis thaliana (Mouse-ear cress).